Here is a 475-residue protein sequence, read N- to C-terminus: Ribulose bisphosphate carboxylase large chain (475 aa).

Positions 1-2 (MS) are excised as a propeptide. P3 bears the N-acetylproline mark. An N6,N6,N6-trimethyllysine modification is found at K14. Substrate is bound by residues N123 and T173. Residue K175 is the Proton acceptor of the active site. Position 177 (K177) interacts with substrate. 3 residues coordinate Mg(2+): K201, D203, and E204. Residue K201 is modified to N6-carboxylysine. H294 functions as the Proton acceptor in the catalytic mechanism. Substrate-binding residues include R295, H327, and S379.

Belongs to the RuBisCO large chain family. Type I subfamily. As to quaternary structure, heterohexadecamer of 8 large chains and 8 small chains; disulfide-linked. The disulfide link is formed within the large subunit homodimers. It depends on Mg(2+) as a cofactor. Post-translationally, the disulfide bond which can form in the large chain dimeric partners within the hexadecamer appears to be associated with oxidative stress and protein turnover.

The protein localises to the plastid. It localises to the chloroplast. It catalyses the reaction 2 (2R)-3-phosphoglycerate + 2 H(+) = D-ribulose 1,5-bisphosphate + CO2 + H2O. The enzyme catalyses D-ribulose 1,5-bisphosphate + O2 = 2-phosphoglycolate + (2R)-3-phosphoglycerate + 2 H(+). Its function is as follows. RuBisCO catalyzes two reactions: the carboxylation of D-ribulose 1,5-bisphosphate, the primary event in carbon dioxide fixation, as well as the oxidative fragmentation of the pentose substrate in the photorespiration process. Both reactions occur simultaneously and in competition at the same active site. This Stellaria media (Common chickweed) protein is Ribulose bisphosphate carboxylase large chain.